A 309-amino-acid polypeptide reads, in one-letter code: MSSQAASDNPFDPAMWERVPGFDDLTDITYHRHVLDGARQPTVRVAFDRPEVRNAFRPHTVDELYRVLDHARMSSDVGVILLTGNGPSPKDGGWAFCSGGDQRIRGRTGYQYASGETAETVDPARAGRLHILEVQRLIRFMPKVVICLVNGWAAGGGHSLHVTCDLTLASREHARFKQTDADVGSFDGGFGSAYLARQTGQKFAREIFFLGRAYDAQTMHQMGAVNEVVDHADLEKAGLQYAAEINGKSPQAIRMLKFAFNLIDDGLVGQQVFAGEATRLAYMTDEAVEGRDAFLEKRDPDWSRFPRYF.

Substrate is bound by residues arginine 53, 98-102, tyrosine 110, 152-156, threonine 179, serine 185, tyrosine 282, and lysine 297; these read SGGDQ and WAAGG.

Belongs to the enoyl-CoA hydratase/isomerase family. MenB subfamily.

The enzyme catalyses 2-succinylbenzoyl-CoA + H(+) = 1,4-dihydroxy-2-naphthoyl-CoA + H2O. Its pathway is quinol/quinone metabolism; 1,4-dihydroxy-2-naphthoate biosynthesis; 1,4-dihydroxy-2-naphthoate from chorismate: step 6/7. The protein operates within quinol/quinone metabolism; menaquinone biosynthesis. Its function is as follows. Converts o-succinylbenzoyl-CoA (OSB-CoA) to 1,4-dihydroxy-2-naphthoyl-CoA (DHNA-CoA). This chain is 1,4-dihydroxy-2-naphthoyl-CoA synthase, found in Mycolicibacterium smegmatis (strain ATCC 700084 / mc(2)155) (Mycobacterium smegmatis).